We begin with the raw amino-acid sequence, 414 residues long: Serine hydroxymethyltransferase (414 aa).

(6S)-5,6,7,8-tetrahydrofolate is bound by residues Leu-121 and Gly-125–Leu-127. Lys-229 is modified (N6-(pyridoxal phosphate)lysine).

The protein belongs to the SHMT family. In terms of assembly, homodimer. It depends on pyridoxal 5'-phosphate as a cofactor.

The protein resides in the cytoplasm. It catalyses the reaction (6R)-5,10-methylene-5,6,7,8-tetrahydrofolate + glycine + H2O = (6S)-5,6,7,8-tetrahydrofolate + L-serine. Its pathway is one-carbon metabolism; tetrahydrofolate interconversion. The protein operates within amino-acid biosynthesis; glycine biosynthesis; glycine from L-serine: step 1/1. Catalyzes the reversible interconversion of serine and glycine with tetrahydrofolate (THF) serving as the one-carbon carrier. This reaction serves as the major source of one-carbon groups required for the biosynthesis of purines, thymidylate, methionine, and other important biomolecules. Also exhibits THF-independent aldolase activity toward beta-hydroxyamino acids, producing glycine and aldehydes, via a retro-aldol mechanism. The chain is Serine hydroxymethyltransferase from Polaromonas sp. (strain JS666 / ATCC BAA-500).